The following is a 1126-amino-acid chain: DNA-directed RNA polymerase subunit Rpo2 (1126 aa).

C1060, C1063, C1078, and H1081 together coordinate Zn(2+).

This sequence belongs to the RNA polymerase beta chain family. In terms of assembly, part of the 13-subunit RNA polymerase complex. Interacts with TFS4. (Microbial infection) Binds viral protein RIP which blocks global transcription. Requires Zn(2+) as cofactor.

It is found in the cytoplasm. It catalyses the reaction RNA(n) + a ribonucleoside 5'-triphosphate = RNA(n+1) + diphosphate. In terms of biological role, DNA-dependent RNA polymerase (RNAP) catalyzes the transcription of DNA into RNA using the four ribonucleoside triphosphates as substrates. This subunit is involved in DNA promoter recognition. In Sulfolobus acidocaldarius (strain ATCC 33909 / DSM 639 / JCM 8929 / NBRC 15157 / NCIMB 11770), this protein is DNA-directed RNA polymerase subunit Rpo2.